The chain runs to 359 residues: DNA integrity scanning protein DisA (359 aa).

The DAC domain occupies 7 to 146 (DEVLRQTLAI…NRRYVLEGSD (140 aa)). ATP is bound by residues Gly74, Leu92, and 105–109 (TRHRT).

It belongs to the DisA family. As to quaternary structure, homooctamer. Mg(2+) is required as a cofactor.

The catalysed reaction is 2 ATP = 3',3'-c-di-AMP + 2 diphosphate. Its function is as follows. Participates in a DNA-damage check-point. DisA forms globular foci that rapidly scan along the chromosomes searching for lesions. Functionally, also has diadenylate cyclase activity, catalyzing the condensation of 2 ATP molecules into cyclic di-AMP (c-di-AMP). c-di-AMP likely acts as a signaling molecule that may couple DNA integrity with a cellular process. The protein is DNA integrity scanning protein DisA of Kineococcus radiotolerans (strain ATCC BAA-149 / DSM 14245 / SRS30216).